A 464-amino-acid polypeptide reads, in one-letter code: Protein FAM90A12 (464 aa).

Disordered stretches follow at residues 1 to 42 (MMAR…DPRL), 70 to 389 (PATL…HDGA), and 411 to 437 (APSFHSPEKPGAFLAQSPHVSEKSEAP). 2 stretches are compositionally biased toward basic and acidic residues: residues 74-89 (GKKEGKENLKPWKPRA) and 97-114 (NKDKGEKEERPRQQDPQR). Residues 180 to 197 (LASLSPLRKASLSSSSSL) are compositionally biased toward low complexity.

Belongs to the FAM90 family.

This is Protein FAM90A12 from Homo sapiens (Human).